Consider the following 58-residue polypeptide: Parvalbumin beta 3 (58 aa).

Position 1 is an N-acetylalanine (Ala1). One can recognise an EF-hand domain in the interval 24 to 58 (FNYKTFFKFFAIIDQDHSGFIEEEELKALSDAETK). Residues Asp37, Asp39, Ser41, Phe43, Glu45, and Glu48 each contribute to the Ca(2+) site.

The protein belongs to the parvalbumin family.

Functionally, in muscle, parvalbumin is thought to be involved in relaxation after contraction. It binds two calcium ions. This Merluccius senegalensis (Senegalese hake) protein is Parvalbumin beta 3.